Consider the following 53-residue polypeptide: Rubredoxin (53 aa).

The Rubredoxin-like domain occupies 1-53 (MTKYVCTVCGYVYDPEVGDPDNNINPGTSFQDIPEDWVCPLCGVGKDQFEEEA). Fe cation is bound by residues cysteine 6, cysteine 9, cysteine 39, and cysteine 42.

It belongs to the rubredoxin family. The cofactor is Fe(3+).

In terms of biological role, rubredoxin is a small nonheme, iron protein lacking acid-labile sulfide. Its single Fe, chelated to 4 Cys, functions as an electron acceptor and may also stabilize the conformation of the molecule. This chain is Rubredoxin, found in Acetoanaerobium sticklandii (strain ATCC 12662 / DSM 519 / JCM 1433 / CCUG 9281 / NCIMB 10654 / HF) (Clostridium sticklandii).